Here is a 376-residue protein sequence, read N- to C-terminus: ATP phosphoribosyltransferase regulatory subunit (376 aa).

Belongs to the class-II aminoacyl-tRNA synthetase family. HisZ subfamily. In terms of assembly, heteromultimer composed of HisG and HisZ subunits.

The protein localises to the cytoplasm. Its pathway is amino-acid biosynthesis; L-histidine biosynthesis; L-histidine from 5-phospho-alpha-D-ribose 1-diphosphate: step 1/9. Functionally, required for the first step of histidine biosynthesis. May allow the feedback regulation of ATP phosphoribosyltransferase activity by histidine. The protein is ATP phosphoribosyltransferase regulatory subunit of Brucella ovis (strain ATCC 25840 / 63/290 / NCTC 10512).